The following is a 313-amino-acid chain: Cyclin-dependent kinase B2-1 (313 aa).

Met1 is modified (N-acetylmethionine). Residues 14–304 (FEKLEKVGEG…AKMAMEHPYF (291 aa)) enclose the Protein kinase domain. ATP contacts are provided by residues 20–28 (VGEGTYGKV) and Lys43. Phosphotyrosine is present on Tyr25. The active-site Proton acceptor is Asp145. Position 179 is a phosphothreonine (Thr179).

The protein belongs to the protein kinase superfamily. CMGC Ser/Thr protein kinase family. CDC2/CDKX subfamily. In terms of assembly, interacts with CYCD4-1 and CKS1. As to expression, expressed in root tips, shoot apical meristem, leaf primordia vascular tissues and tapetum of anthers.

The catalysed reaction is L-seryl-[protein] + ATP = O-phospho-L-seryl-[protein] + ADP + H(+). It carries out the reaction L-threonyl-[protein] + ATP = O-phospho-L-threonyl-[protein] + ADP + H(+). The enzyme catalyses [DNA-directed RNA polymerase] + ATP = phospho-[DNA-directed RNA polymerase] + ADP + H(+). In Arabidopsis thaliana (Mouse-ear cress), this protein is Cyclin-dependent kinase B2-1 (CDKB2-1).